The sequence spans 355 residues: Peptide chain release factor 1 (355 aa).

Q231 carries the N5-methylglutamine modification. Residues 283 to 292 (IAKETSERKS) are compositionally biased toward basic and acidic residues. The tract at residues 283–303 (IAKETSERKSQVGTGDRSGRI) is disordered.

It belongs to the prokaryotic/mitochondrial release factor family. Post-translationally, methylated by PrmC. Methylation increases the termination efficiency of RF1.

The protein localises to the cytoplasm. Functionally, peptide chain release factor 1 directs the termination of translation in response to the peptide chain termination codons UAG and UAA. The protein is Peptide chain release factor 1 of Campylobacter curvus (strain 525.92).